The sequence spans 294 residues: N-acetylmuramic acid 6-phosphate etherase (294 aa).

One can recognise an SIS domain in the interval 56–219 (TSYSLRNGGR…STLSMVSVGK (164 aa)). Residue E84 is the Proton donor of the active site. The active site involves E115.

The protein belongs to the GCKR-like family. MurNAc-6-P etherase subfamily. In terms of assembly, homodimer.

It carries out the reaction N-acetyl-D-muramate 6-phosphate + H2O = N-acetyl-D-glucosamine 6-phosphate + (R)-lactate. Its pathway is amino-sugar metabolism; 1,6-anhydro-N-acetylmuramate degradation. It functions in the pathway amino-sugar metabolism; N-acetylmuramate degradation. The protein operates within cell wall biogenesis; peptidoglycan recycling. In terms of biological role, specifically catalyzes the cleavage of the D-lactyl ether substituent of MurNAc 6-phosphate, producing GlcNAc 6-phosphate and D-lactate. Together with AnmK, is also required for the utilization of anhydro-N-acetylmuramic acid (anhMurNAc) either imported from the medium or derived from its own cell wall murein, and thus plays a role in cell wall recycling. The polypeptide is N-acetylmuramic acid 6-phosphate etherase (Francisella tularensis subsp. holarctica (strain LVS)).